The following is a 371-amino-acid chain: tRNA (guanine(26)-N(2))-dimethyltransferase (371 aa).

The region spanning 1–370 (MDVSEGGVTV…GGLAEVEAAV (370 aa)) is the Trm1 methyltransferase domain. The S-adenosyl-L-methionine site is built by R36, R66, D81, D107, and A108. Residues C238, C241, C258, and C261 each coordinate Zn(2+).

This sequence belongs to the class I-like SAM-binding methyltransferase superfamily. Trm1 family.

The enzyme catalyses guanosine(26) in tRNA + 2 S-adenosyl-L-methionine = N(2)-dimethylguanosine(26) in tRNA + 2 S-adenosyl-L-homocysteine + 2 H(+). Dimethylates a single guanine residue at position 26 of a number of tRNAs using S-adenosyl-L-methionine as donor of the methyl groups. This chain is tRNA (guanine(26)-N(2))-dimethyltransferase, found in Halobacterium salinarum (strain ATCC 700922 / JCM 11081 / NRC-1) (Halobacterium halobium).